Reading from the N-terminus, the 126-residue chain is Urease subunit beta (126 aa).

This sequence belongs to the urease beta subunit family. As to quaternary structure, heterotrimer of UreA (gamma), UreB (beta) and UreC (alpha) subunits. Three heterotrimers associate to form the active enzyme.

The protein localises to the cytoplasm. The enzyme catalyses urea + 2 H2O + H(+) = hydrogencarbonate + 2 NH4(+). Its pathway is nitrogen metabolism; urea degradation; CO(2) and NH(3) from urea (urease route): step 1/1. The chain is Urease subunit beta from Sporosarcina pasteurii (Bacillus pasteurii).